A 939-amino-acid chain; its full sequence is UvrABC system protein A (939 aa).

Residue 32-39 coordinates ATP; that stretch reads GLSGSGKS. The C4-type zinc finger occupies 252 to 279; it reads CPDCGISIGEISPSMFSFNAPFGKCDVC. ABC transporter domains follow at residues 309-588 and 608-936; these read WGEG…KESI and AGKN…QYLK. Residue 640–647 coordinates ATP; it reads GVSGSGKS. The C4-type zinc-finger motif lies at 739–765; the sequence is CEACKGDGIVRIEMQFLSDVYVPCDVC.

It belongs to the ABC transporter superfamily. UvrA family. As to quaternary structure, forms a heterotetramer with UvrB during the search for lesions.

It is found in the cytoplasm. In terms of biological role, the UvrABC repair system catalyzes the recognition and processing of DNA lesions. UvrA is an ATPase and a DNA-binding protein. A damage recognition complex composed of 2 UvrA and 2 UvrB subunits scans DNA for abnormalities. When the presence of a lesion has been verified by UvrB, the UvrA molecules dissociate. This is UvrABC system protein A from Clostridium acetobutylicum (strain ATCC 824 / DSM 792 / JCM 1419 / IAM 19013 / LMG 5710 / NBRC 13948 / NRRL B-527 / VKM B-1787 / 2291 / W).